We begin with the raw amino-acid sequence, 445 residues long: MSTILESLPTGQKVGIAFSGGLDTSAALHWMKLKGAVPYAYTANLGQPDEDDYDAIPKRAIEYGAAGARLIDCRAQLVAEGIAALQSGAFHITTAGVTYFNTTPIGRAVTGTMLVAAMKEDGVNIWGDGSTYKGNDIERFYRYGLLVNPDLKIYKPWLDQTFIDELGGRAEMSEFMNQAGFAYKMSAEKAYSTDSNLLGATHEAKDLESLESGIKIVNPIMGVAFWRDDVKIAAEEVTVRFEAGQPVALNGVEFKDQVELLLEANRIGGRHGLGMSDQIENRIIEAKSRGIYEAPGLALLYIAYERLVTGIHNEDTIEQYRENGRRLGRLLYQGRWFDPQAIMLRETAQRWVARAITGEVKIELRRGNDYSILSTKSPNLTYQPERLSMEKVASTFSPRDRIGQLTMRNLDITDTRDKLRVYSQVGLLTPGETSALPQIKGDGDK.

Residues 17–25 (AFSGGLDTS) and Ala-43 contribute to the ATP site. Tyr-99 is an L-citrulline binding site. Residues Gly-129 and Thr-131 each coordinate ATP. Residues Thr-131, Asn-135, and Asp-136 each coordinate L-aspartate. Position 135 (Asn-135) interacts with L-citrulline. Position 136 (Asp-136) interacts with ATP. Arg-139 and Ser-192 together coordinate L-citrulline. ATP is bound at residue Asp-194. 3 residues coordinate L-citrulline: Thr-201, Glu-203, and Glu-280.

The protein belongs to the argininosuccinate synthase family. Type 2 subfamily. Homotetramer.

It is found in the cytoplasm. The catalysed reaction is L-citrulline + L-aspartate + ATP = 2-(N(omega)-L-arginino)succinate + AMP + diphosphate + H(+). It functions in the pathway amino-acid biosynthesis; L-arginine biosynthesis; L-arginine from L-ornithine and carbamoyl phosphate: step 2/3. The sequence is that of Argininosuccinate synthase from Burkholderia cenocepacia (strain HI2424).